The sequence spans 272 residues: Undecaprenyl-diphosphatase (272 aa).

8 helical membrane passes run 1–21 (MSYLEAIILGLVQGLTEFLPI), 38–58 (PGATFTAITQLGTELAVVVFF), 84–104 (VRMGWLVIIGTIPIGIAGYLF), 112–132 (FRSLWIVAIVLIVFGILLGLA), 145–165 (MTYGHGVSIGIAQALALVPGV), 183–203 (PVAAEYSFLLAVPAVFGSGLY), 219–239 (QTAVATLIAFIVGLAVIAGLM), and 250–270 (FVVYRVALGVVLLVLLGTGAI).

It belongs to the UppP family.

It is found in the cell membrane. It catalyses the reaction di-trans,octa-cis-undecaprenyl diphosphate + H2O = di-trans,octa-cis-undecaprenyl phosphate + phosphate + H(+). Catalyzes the dephosphorylation of undecaprenyl diphosphate (UPP). Confers resistance to bacitracin. This chain is Undecaprenyl-diphosphatase, found in Clavibacter michiganensis subsp. michiganensis (strain NCPPB 382).